The primary structure comprises 130 residues: UPF0102 protein SCO5602 (130 aa).

It belongs to the UPF0102 family.

This chain is UPF0102 protein SCO5602, found in Streptomyces coelicolor (strain ATCC BAA-471 / A3(2) / M145).